Consider the following 325-residue polypeptide: RNA ligase 1 (325 aa).

It depends on Mg(2+) as a cofactor. Mn(2+) serves as cofactor. In terms of processing, AMPylates itself (auto-AMPylation).

The enzyme catalyses ATP + (ribonucleotide)n-3'-hydroxyl + 5'-phospho-(ribonucleotide)m = (ribonucleotide)n+m + AMP + diphosphate.. In terms of biological role, functions as an RNA ligase, in vitro. The ligation reaction entails three nucleotidyl transfer steps. In the first step, the RNA ligase reacts with ATP in the absence of nucleic acid to form a covalent ligase-AMP intermediate and release pyrophosphate. In step 2, the ligase-AMP binds to the nucleic acid and transfers the adenylate to the 5'-PO4 terminus to form an adenylylated intermediate. In step 3, the RNA ligase directs the attack of the 3'-OH on the 5'-phosphoanhydride linkage, resulting in a repaired 3'-5' phosphodiester and release of AMP. Exhibits selectivity for single-stranded RNA substrates and may not have nick-sealing activity on double-stranded DNA-RNA hybrids. May play a role in maintaining RNA integrity under stress conditions, for example in response to reactive oxygen species (ROS). The chain is RNA ligase 1 from Danio rerio (Zebrafish).